The sequence spans 232 residues: 2-C-methyl-D-erythritol 4-phosphate cytidylyltransferase (232 aa).

The protein belongs to the IspD/TarI cytidylyltransferase family. IspD subfamily.

It catalyses the reaction 2-C-methyl-D-erythritol 4-phosphate + CTP + H(+) = 4-CDP-2-C-methyl-D-erythritol + diphosphate. Its pathway is isoprenoid biosynthesis; isopentenyl diphosphate biosynthesis via DXP pathway; isopentenyl diphosphate from 1-deoxy-D-xylulose 5-phosphate: step 2/6. Its function is as follows. Catalyzes the formation of 4-diphosphocytidyl-2-C-methyl-D-erythritol from CTP and 2-C-methyl-D-erythritol 4-phosphate (MEP). This is 2-C-methyl-D-erythritol 4-phosphate cytidylyltransferase from Synechococcus sp. (strain ATCC 27144 / PCC 6301 / SAUG 1402/1) (Anacystis nidulans).